A 303-amino-acid chain; its full sequence is Caspase-7 (303 aa).

Position 1 is an N-acetylmethionine (M1). A propeptide spanning residues 1-23 is cleaved from the precursor; sequence MTDDQDCAAELEKVDSSSEDGVD. The segment at 1–26 is disordered; the sequence is MTDDQDCAAELEKVDSSSEDGVDAKP. Over residues 10–26 the composition is skewed to basic and acidic residues; sequence ELEKVDSSSEDGVDAKP. The residue at position 30 (S30) is a Phosphoserine. The exosite stretch occupies residues 38 to 41; sequence KKKR. The interval 76–87 is loop L1; it reads KNFDKATGMDVR. H144 is an active-site residue. Position 173 is a phosphothreonine (T173). C186 is an active-site residue. The tract at residues 187-196 is loop L2; it reads RGTELDDGIQ. Residues 199 to 206 constitute a propeptide that is removed on maturation; the sequence is SGPINDID. A loop L3 region spans residues 226-238; the sequence is VPGYYSWRNPGKG. Position 239 is a phosphoserine (S239). Positions 274–288 are loop L4; it reads ESQSDDPRFNEKKQI.

Belongs to the peptidase C14A family. In terms of assembly, heterotetramer that consists of two anti-parallel arranged heterodimers, each one formed by a 20 kDa (p20) and a 11 kDa (p11) subunit. Interacts with XIAP (via its second BIR domain); inhibiting CASP7 activity. Interacts with BIRC6/bruce. Interacts with ATXN3 (short isoform 1). Interacts with HSPA5. In terms of processing, cleavage by different proteases, such as granzyme B (GZMB), caspase-1 (CASP1), caspase-8 (CASP8) or caspase-9 (CASP9) generate the two active subunits. Its involvement in different programmed cell death processes is probably specified by the protease that activates CASP7. Cleaved and activated by initiator caspases (CASP8 and/or CASP9), leading to execution phase of apoptosis. Cleavage and maturation by GZMB regulates granzyme-mediated programmed cell death. Cleaved and activated by CASP1 in response to bacterial infection. Propeptide domains can also be cleaved efficiently by CASP3. Active heterodimers between the small subunit of caspase-7 and the large subunit of CASP3, and vice versa, also occur. Also cleaved at the N-terminus at alternative sites by CAPN1, leading to its activation. Post-translationally, phosphorylation at Ser-30 and Ser-239 by PAK2 inhibits its activity. Phosphorylation at Ser-30 prevents cleavage and activation by initiator caspase CASP9, while phosphorylation at Ser-239 prevents thiol protease activity by preventing substrate-binding. Ubiquitinated by BIRC6; this activity is inhibited by DIABLO/SMAC. As to expression, highly expressed in heart, lung, liver and kidney. Low levels in spleen, skeletal muscle and testis. No expression in the brain.

Its subcellular location is the cytoplasm. The protein localises to the cytosol. It is found in the nucleus. It localises to the secreted. The protein resides in the extracellular space. It catalyses the reaction Strict requirement for an Asp residue at position P1 and has a preferred cleavage sequence of Asp-Glu-Val-Asp-|-.. With respect to regulation, during activation, the N-terminal disordered prodomain is removed by cleavage. Concomitantly, double cleavage gives rise to a large Caspase-7 subunit p20 and a small Caspase-7 subunit p11. The two large and two small subunits then assemble to form the active CASP7 complex. Can be cleaved and activated by different caspases, depending on the context. Cleaved and activated by initiator caspases (CASP8 and/or CASP9), leading to execution phase of apoptosis. Cleavage and maturation by GZMB regulates granzyme-mediated programmed cell death. Cleavage and maturation by CASP1 regulates pyroptosis. Inhibited by XIAP, which directly binds to the active site pocket and obstructs substrate entry. Phosphorylation at Ser-30 and Ser-239 by PAK2 inhibits its activity. Inhibited by BIRC6; following inhibition of BIRC6-caspase binding by DIABLO/SMAC, BIRC6 is subjected to caspase cleavage, leading to an increase in active caspases. Functionally, thiol protease involved in different programmed cell death processes, such as apoptosis, pyroptosis or granzyme-mediated programmed cell death, by proteolytically cleaving target proteins. Has a marked preference for Asp-Glu-Val-Asp (DEVD) consensus sequences, with some plasticity for alternate non-canonical sequences. Its involvement in the different programmed cell death processes is probably determined by upstream proteases that activate CASP7. Acts as an effector caspase involved in the execution phase of apoptosis: following cleavage and activation by initiator caspases (CASP8 and/or CASP9), mediates execution of apoptosis by catalyzing cleavage of proteins, such as CLSPN, PARP1, PTGES3 and YY1. Compared to CASP3, acts as a minor executioner caspase and cleaves a limited set of target proteins. Acts as a key regulator of the inflammatory response in response to bacterial infection by catalyzing cleavage and activation of the sphingomyelin phosphodiesterase SMPD1 in the extracellular milieu, thereby promoting membrane repair. Regulates pyroptosis in intestinal epithelial cells: cleaved and activated by CASP1 in response to S.typhimurium infection, promoting its secretion to the extracellular milieu, where it catalyzes activation of SMPD1, generating ceramides that repair membranes and counteract the action of gasdermin-D (GSDMD) pores. Regulates granzyme-mediated programmed cell death in hepatocytes: cleaved and activated by granzyme B (GZMB) in response to bacterial infection, promoting its secretion to the extracellular milieu, where it catalyzes activation of SMPD1, generating ceramides that repair membranes and counteract the action of perforin (PRF1) pores. Following cleavage by CASP1 in response to inflammasome activation, catalyzes processing and inactivation of PARP1, alleviating the transcription repressor activity of PARP1. Acts as an inhibitor of type I interferon production during virus-induced apoptosis by mediating cleavage of antiviral proteins CGAS, IRF3 and MAVS, thereby preventing cytokine overproduction. Cleaves and activates sterol regulatory element binding proteins (SREBPs). Cleaves phospholipid scramblase proteins XKR4, XKR8 and XKR9. Cleaves BIRC6 following inhibition of BIRC6-caspase binding by DIABLO/SMAC. This is Caspase-7 from Mus musculus (Mouse).